The chain runs to 315 residues: 4-hydroxy-3-methylbut-2-enyl diphosphate reductase (315 aa).

Cys12 lines the [4Fe-4S] cluster pocket. Residues His41 and His74 each contribute to the (2E)-4-hydroxy-3-methylbut-2-enyl diphosphate site. Dimethylallyl diphosphate is bound by residues His41 and His74. Isopentenyl diphosphate-binding residues include His41 and His74. Cys96 is a binding site for [4Fe-4S] cluster. Position 124 (His124) interacts with (2E)-4-hydroxy-3-methylbut-2-enyl diphosphate. His124 contributes to the dimethylallyl diphosphate binding site. His124 contacts isopentenyl diphosphate. The active-site Proton donor is the Glu126. Thr168 is a binding site for (2E)-4-hydroxy-3-methylbut-2-enyl diphosphate. A [4Fe-4S] cluster-binding site is contributed by Cys198. 4 residues coordinate (2E)-4-hydroxy-3-methylbut-2-enyl diphosphate: Ser226, Ser227, Asn228, and Ser270. Dimethylallyl diphosphate is bound by residues Ser226, Ser227, Asn228, and Ser270. Isopentenyl diphosphate contacts are provided by Ser226, Ser227, Asn228, and Ser270.

This sequence belongs to the IspH family. [4Fe-4S] cluster serves as cofactor.

The enzyme catalyses isopentenyl diphosphate + 2 oxidized [2Fe-2S]-[ferredoxin] + H2O = (2E)-4-hydroxy-3-methylbut-2-enyl diphosphate + 2 reduced [2Fe-2S]-[ferredoxin] + 2 H(+). The catalysed reaction is dimethylallyl diphosphate + 2 oxidized [2Fe-2S]-[ferredoxin] + H2O = (2E)-4-hydroxy-3-methylbut-2-enyl diphosphate + 2 reduced [2Fe-2S]-[ferredoxin] + 2 H(+). It functions in the pathway isoprenoid biosynthesis; dimethylallyl diphosphate biosynthesis; dimethylallyl diphosphate from (2E)-4-hydroxy-3-methylbutenyl diphosphate: step 1/1. Its pathway is isoprenoid biosynthesis; isopentenyl diphosphate biosynthesis via DXP pathway; isopentenyl diphosphate from 1-deoxy-D-xylulose 5-phosphate: step 6/6. Its function is as follows. Catalyzes the conversion of 1-hydroxy-2-methyl-2-(E)-butenyl 4-diphosphate (HMBPP) into a mixture of isopentenyl diphosphate (IPP) and dimethylallyl diphosphate (DMAPP). Acts in the terminal step of the DOXP/MEP pathway for isoprenoid precursor biosynthesis. The chain is 4-hydroxy-3-methylbut-2-enyl diphosphate reductase from Pseudomonas syringae pv. tomato (strain ATCC BAA-871 / DC3000).